A 339-amino-acid polypeptide reads, in one-letter code: Phenylalanine--tRNA ligase alpha subunit (339 aa).

Glutamate 247 lines the Mg(2+) pocket.

It belongs to the class-II aminoacyl-tRNA synthetase family. Phe-tRNA synthetase alpha subunit type 1 subfamily. In terms of assembly, tetramer of two alpha and two beta subunits. It depends on Mg(2+) as a cofactor.

The protein resides in the cytoplasm. The catalysed reaction is tRNA(Phe) + L-phenylalanine + ATP = L-phenylalanyl-tRNA(Phe) + AMP + diphosphate + H(+). This chain is Phenylalanine--tRNA ligase alpha subunit, found in Deinococcus deserti (strain DSM 17065 / CIP 109153 / LMG 22923 / VCD115).